The sequence spans 128 residues: Iron-sulfur cluster insertion protein ErpA (128 aa).

Positions 56, 120, and 122 each coordinate iron-sulfur cluster.

Belongs to the HesB/IscA family. In terms of assembly, homodimer. Requires iron-sulfur cluster as cofactor.

Its function is as follows. Required for insertion of 4Fe-4S clusters for at least IspG. This is Iron-sulfur cluster insertion protein ErpA from Xanthomonas axonopodis pv. citri (strain 306).